Reading from the N-terminus, the 422-residue chain is MQCDFVDRILNEYDLLNAIVYRSKFTHEVKVGDVIIGGNNPIVVQSMALGGSGDVYQDAREVLELAQAGSELVRIAINSDKAIKSVPYIRDVLINHGFNSKMIIGCGQYEIARLVKQYPECALALGKIRINPGNIGFGDKRDKNFEDIIEFAIKNDIPIRIGVNWGSLDKYLAAKLMHDNSLRGTPDPDYVVLRKALVISAITSAKHAEKVGLPANKIVISCKVSKVRDLISVYTMLSKICDYPLHLGLTEAGSGVKGIVGSSAGISYLLLHGIGNTIRVSLTQQPGESRTNEVKLCQEILQSIGLRNFSVQVTSCPGCNRTNPKYFHQLVSDVNKYVADRMSVWKNANPGVENMTIAVMGCVVNGPGESKHANLGISMPGYGERSVAAVYQNGEKLCTLEGNNIFEQFVSIIENYVSIYYH.

Cysteine 316, cysteine 319, cysteine 362, and glutamate 369 together coordinate [4Fe-4S] cluster.

This sequence belongs to the IspG family. The cofactor is [4Fe-4S] cluster.

It carries out the reaction (2E)-4-hydroxy-3-methylbut-2-enyl diphosphate + oxidized [flavodoxin] + H2O + 2 H(+) = 2-C-methyl-D-erythritol 2,4-cyclic diphosphate + reduced [flavodoxin]. The protein operates within isoprenoid biosynthesis; isopentenyl diphosphate biosynthesis via DXP pathway; isopentenyl diphosphate from 1-deoxy-D-xylulose 5-phosphate: step 5/6. Converts 2C-methyl-D-erythritol 2,4-cyclodiphosphate (ME-2,4cPP) into 1-hydroxy-2-methyl-2-(E)-butenyl 4-diphosphate. The polypeptide is 4-hydroxy-3-methylbut-2-en-1-yl diphosphate synthase (flavodoxin) (Ehrlichia ruminantium (strain Welgevonden)).